We begin with the raw amino-acid sequence, 939 residues long: Translation initiation factor IF-2 (939 aa).

The segment covering 81–94 (EEQSRKAYEKEQQL) has biased composition (basic and acidic residues). 2 disordered regions span residues 81-303 (EEQS…KKVE) and 316-337 (TISG…KMRR). The span at 99–108 (SSAPSPAPAA) shows a compositional bias: low complexity. Composition is skewed to basic and acidic residues over residues 112-127 (EPVK…RHEP) and 148-173 (SPKE…EKAA). The segment covering 178 to 189 (EAQPEAQSQQEP) has biased composition (low complexity). A compositionally biased stretch (basic and acidic residues) spans 244 to 255 (FKENAAELKDEF). A compositionally biased stretch (low complexity) spans 276 to 287 (AAGEGESTTGGE). The segment covering 292–301 (KKKKGKKKKK) has biased composition (basic residues). A compositionally biased stretch (low complexity) spans 318–328 (SGMDDSGSSGS). Positions 436–606 (TRPPVVTIMG…LTEAEVRELK (171 aa)) constitute a tr-type G domain. The interval 445–452 (GHVDHGKT) is G1. 445–452 (GHVDHGKT) contacts GTP. The G2 stretch occupies residues 470–474 (GITQH). Residues 492-495 (DTPG) are G3. Residues 492–496 (DTPGH) and 546–549 (NKID) each bind GTP. The tract at residues 546-549 (NKID) is G4. The interval 582–584 (SAK) is G5.

The protein belongs to the TRAFAC class translation factor GTPase superfamily. Classic translation factor GTPase family. IF-2 subfamily.

The protein localises to the cytoplasm. One of the essential components for the initiation of protein synthesis. Protects formylmethionyl-tRNA from spontaneous hydrolysis and promotes its binding to the 30S ribosomal subunits. Also involved in the hydrolysis of GTP during the formation of the 70S ribosomal complex. This Chlorobaculum parvum (strain DSM 263 / NCIMB 8327) (Chlorobium vibrioforme subsp. thiosulfatophilum) protein is Translation initiation factor IF-2.